A 136-amino-acid polypeptide reads, in one-letter code: Ribosome-binding factor A (136 aa).

This sequence belongs to the RbfA family. As to quaternary structure, monomer. Binds 30S ribosomal subunits, but not 50S ribosomal subunits or 70S ribosomes.

The protein resides in the cytoplasm. Its function is as follows. One of several proteins that assist in the late maturation steps of the functional core of the 30S ribosomal subunit. Associates with free 30S ribosomal subunits (but not with 30S subunits that are part of 70S ribosomes or polysomes). Required for efficient processing of 16S rRNA. May interact with the 5'-terminal helix region of 16S rRNA. The sequence is that of Ribosome-binding factor A from Yersinia pestis bv. Antiqua (strain Antiqua).